The chain runs to 556 residues: 2-succinyl-5-enolpyruvyl-6-hydroxy-3-cyclohexene-1-carboxylate synthase (556 aa).

This sequence belongs to the TPP enzyme family. MenD subfamily. As to quaternary structure, homodimer. It depends on Mg(2+) as a cofactor. Mn(2+) is required as a cofactor. Requires thiamine diphosphate as cofactor.

The enzyme catalyses isochorismate + 2-oxoglutarate + H(+) = 5-enolpyruvoyl-6-hydroxy-2-succinyl-cyclohex-3-ene-1-carboxylate + CO2. It functions in the pathway quinol/quinone metabolism; 1,4-dihydroxy-2-naphthoate biosynthesis; 1,4-dihydroxy-2-naphthoate from chorismate: step 2/7. The protein operates within quinol/quinone metabolism; menaquinone biosynthesis. Catalyzes the thiamine diphosphate-dependent decarboxylation of 2-oxoglutarate and the subsequent addition of the resulting succinic semialdehyde-thiamine pyrophosphate anion to isochorismate to yield 2-succinyl-5-enolpyruvyl-6-hydroxy-3-cyclohexene-1-carboxylate (SEPHCHC). The protein is 2-succinyl-5-enolpyruvyl-6-hydroxy-3-cyclohexene-1-carboxylate synthase of Salmonella paratyphi B (strain ATCC BAA-1250 / SPB7).